The primary structure comprises 736 residues: Probable potassium transport system protein Kup 2 (736 aa).

The next 12 helical transmembrane spans lie at 1–21 (MAIV…LYTA), 42–62 (MLSL…VLIA), 84–104 (GAWL…DSVL), 126–146 (LFDE…VILF), 156–176 (IGKV…IVGV), 204–224 (AAGI…EALY), 239–259 (WPFI…WMLA), 287–307 (AVIL…TGAF), 334–354 (LYIP…LAIF), 364–384 (YGLA…VYLW), 390–410 (VGAI…FIAS), and 414–434 (FLHG…VMYT). 2 disordered regions span residues 649-678 (TDTA…DTTS) and 693-736 (AEAR…KQKR). Composition is skewed to low complexity over residues 660 to 677 (PTRA…MDTT) and 700 to 709 (EAAAADAPAE). Residues 710–721 (QGDKGDKGKAEN) show a composition bias toward basic and acidic residues.

It belongs to the HAK/KUP transporter (TC 2.A.72) family.

Its subcellular location is the cell membrane. It catalyses the reaction K(+)(in) + H(+)(in) = K(+)(out) + H(+)(out). Functionally, transport of potassium into the cell. Likely operates as a K(+):H(+) symporter. In Bifidobacterium longum (strain NCC 2705), this protein is Probable potassium transport system protein Kup 2.